Here is a 771-residue protein sequence, read N- to C-terminus: Probable aconitate hydratase, mitochondrial (771 aa).

Substrate contacts are provided by residues Gln86 and 179-181 (DSH). [4Fe-4S] cluster contacts are provided by Cys372, Cys435, and Cys438. Residues Arg461, Arg466, Arg594, and 657 to 658 (SR) contribute to the substrate site.

The protein belongs to the aconitase/IPM isomerase family. In terms of assembly, monomer. Requires [4Fe-4S] cluster as cofactor.

It localises to the mitochondrion. It catalyses the reaction citrate = D-threo-isocitrate. The protein operates within carbohydrate metabolism; tricarboxylic acid cycle; isocitrate from oxaloacetate: step 2/2. Catalyzes the isomerization of citrate to isocitrate via cis-aconitate. This is Probable aconitate hydratase, mitochondrial (aco2) from Dictyostelium discoideum (Social amoeba).